A 178-amino-acid polypeptide reads, in one-letter code: CDP-archaeol synthase (178 aa).

Helical transmembrane passes span 3-23 (LLLL…ANAV), 56-76 (FFGI…VILY), 91-111 (IILS…GSFI), and 136-156 (LLFA…LLVI).

This sequence belongs to the CDP-archaeol synthase family. It depends on Mg(2+) as a cofactor.

It localises to the cell membrane. It catalyses the reaction 2,3-bis-O-(geranylgeranyl)-sn-glycerol 1-phosphate + CTP + H(+) = CDP-2,3-bis-O-(geranylgeranyl)-sn-glycerol + diphosphate. It participates in membrane lipid metabolism; glycerophospholipid metabolism. Its function is as follows. Catalyzes the formation of CDP-2,3-bis-(O-geranylgeranyl)-sn-glycerol (CDP-archaeol) from 2,3-bis-(O-geranylgeranyl)-sn-glycerol 1-phosphate (DGGGP) and CTP. This reaction is the third ether-bond-formation step in the biosynthesis of archaeal membrane lipids. This is CDP-archaeol synthase from Methanococcus maripaludis (strain C5 / ATCC BAA-1333).